The following is a 150-amino-acid chain: 3-dehydroquinate dehydratase (150 aa).

Y26 acts as the Proton acceptor in catalysis. Residues N77, H83, and D90 each coordinate substrate. H103 (proton donor) is an active-site residue. Substrate-binding positions include 104-105 (IS) and R114.

This sequence belongs to the type-II 3-dehydroquinase family. Homododecamer.

The catalysed reaction is 3-dehydroquinate = 3-dehydroshikimate + H2O. It participates in metabolic intermediate biosynthesis; chorismate biosynthesis; chorismate from D-erythrose 4-phosphate and phosphoenolpyruvate: step 3/7. Functionally, catalyzes a trans-dehydration via an enolate intermediate. This is 3-dehydroquinate dehydratase from Buchnera aphidicola subsp. Acyrthosiphon pisum (strain 5A).